A 492-amino-acid polypeptide reads, in one-letter code: Chitooligosaccharide oxidase (492 aa).

The signal sequence occupies residues 1-19 (MHFNTLTCVLVGLVAHTSA). In terms of domain architecture, FAD-binding PCMH-type spans 57 to 229 (LPFEPAAIAV…VELEFQTFAA (173 aa)). Positions 94 to 154 (HSYTSLGFGG…GKRALAHGTC (61 aa)) form a cross-link, 6-(S-cysteinyl)-8alpha-(pros-histidyl)-FAD (His-Cys).

Belongs to the oxygen-dependent FAD-linked oxidoreductase family. FAD serves as cofactor. Post-translationally, the FAD cofactor is bound via a bicovalent 6-S-cysteinyl, 8alpha-N1-histidyl FAD linkage.

It is found in the secreted. The catalysed reaction is N,N'-diacetylchitobiose + O2 = N,N'-diacetylchitobiono-1,5-lactone + H2O2. The enzyme catalyses N,N',N''-triacetylchitotriose + O2 = N,N',N''-triacetylchitotriono-1,5-lactone + H2O2. It catalyses the reaction N,N',N'',N'''-tetraacetylchitotetraose + O2 = N,N',N'',N'''-tetraacetylchitotetraono-1,5-lactone + H2O2. Catalyzes the selective oxidation of C1 hydroxyl moieties on chitooligosaccharides with concomitant reduction of molecular oxygen to hydrogen peroxide. This results in the formation of the corresponding lactones, which typically undergo spontaneous hydrolysis. Chitooligosaccharides are homo- or heterooligomers of N-acetylglucosamine (GlcNAc) and D-glucosamine which are linked through beta-1,4-glycosidic bonds. For optimal substrate binding at least 2 GlcNAc units are needed, and chitooligosaccharide oxidase is most efficient on chitobiose, chitotriose and chitotetraose. This is Chitooligosaccharide oxidase from Gibberella zeae (strain ATCC MYA-4620 / CBS 123657 / FGSC 9075 / NRRL 31084 / PH-1) (Wheat head blight fungus).